The sequence spans 140 residues: Ribonucleases P/MRP protein subunit POP7 (140 aa).

A disordered region spans residues 1–21 (MALKKNTHNKSTKRVTKHPSL). At Ser-115 the chain carries Phosphoserine.

This sequence belongs to the histone-like Alba family. As to quaternary structure, component of nuclear RNase P and RNase MRP complexes. RNase P consists of an RNA moiety and at least 9 protein subunits including POP1, POP3, POP4, POP5, POP6, POP7, POP8, RPP1 and RPR2. RNase MRP complex consists of an RNA moiety and at least 10 protein subunits including POP1, POP3, POP4, POP5, POP6, POP7, POP8, RMP1, RPP1 and SNM1, many of which are shared with the RNase P complex.

It is found in the nucleus. It catalyses the reaction Endonucleolytic cleavage of RNA, removing 5'-extranucleotides from tRNA precursor.. Its function is as follows. Component of ribonuclease P, a protein complex that generates mature tRNA molecules by cleaving their 5'-ends. Also a component of RNase MRP, which cleaves pre-rRNA sequences. This chain is Ribonucleases P/MRP protein subunit POP7 (POP7), found in Saccharomyces cerevisiae (strain ATCC 204508 / S288c) (Baker's yeast).